Consider the following 317-residue polypeptide: Protein translocase subunit SecF (317 aa).

A run of 6 helical transmembrane segments spans residues 11 to 31, 135 to 155, 166 to 186, 197 to 217, 244 to 266, and 276 to 298; these read FYLL…LFGL, RSIV…AFAF, ICAI…FAIL, LFVT…IVVF, LVRS…FFGG, and LLIG…LVSW.

It belongs to the SecD/SecF family. SecF subfamily. As to quaternary structure, forms a complex with SecD. Part of the essential Sec protein translocation apparatus which comprises SecA, SecYEG and auxiliary proteins SecDF. Other proteins may also be involved.

The protein resides in the cell membrane. Functionally, part of the Sec protein translocase complex. Interacts with the SecYEG preprotein conducting channel. SecDF uses the proton motive force (PMF) to complete protein translocation after the ATP-dependent function of SecA. The protein is Protein translocase subunit SecF of Thermobaculum terrenum (strain ATCC BAA-798 / CCMEE 7001 / YNP1).